The following is a 189-amino-acid chain: UPF0688 protein C1orf174 homolog (189 aa).

The disordered stretch occupies residues 53-137 (QMAGDGGEAK…TTDPSVFFDE (85 aa)). 2 stretches are compositionally biased toward basic and acidic residues: residues 59-73 (GEAK…HGEV) and 93-103 (APGERRGKENS).

It belongs to the UPF0688 family.

It localises to the nucleus. The chain is UPF0688 protein C1orf174 homolog from Danio rerio (Zebrafish).